Here is a 382-residue protein sequence, read N- to C-terminus: D-galactonate dehydratase (382 aa).

Aspartate 183 is a binding site for Mg(2+). Histidine 185 functions as the Proton donor in the catalytic mechanism. Positions 209 and 235 each coordinate Mg(2+). Residue histidine 285 is the Proton acceptor of the active site.

It belongs to the mandelate racemase/muconate lactonizing enzyme family. GalD subfamily. Requires Mg(2+) as cofactor.

It carries out the reaction D-galactonate = 2-dehydro-3-deoxy-D-galactonate + H2O. The protein operates within carbohydrate acid metabolism; D-galactonate degradation; D-glyceraldehyde 3-phosphate and pyruvate from D-galactonate: step 1/3. In terms of biological role, catalyzes the dehydration of D-galactonate to 2-keto-3-deoxy-D-galactonate. The chain is D-galactonate dehydratase from Escherichia coli O45:K1 (strain S88 / ExPEC).